Consider the following 142-residue polypeptide: Large ribosomal subunit protein uL13 (142 aa).

Belongs to the universal ribosomal protein uL13 family. Part of the 50S ribosomal subunit.

In terms of biological role, this protein is one of the early assembly proteins of the 50S ribosomal subunit, although it is not seen to bind rRNA by itself. It is important during the early stages of 50S assembly. The polypeptide is Large ribosomal subunit protein uL13 (Koribacter versatilis (strain Ellin345)).